The primary structure comprises 198 residues: Holliday junction branch migration complex subunit RuvA (198 aa).

Positions 1 to 61 are domain I; that stretch reads MTLYKIGEIV…DYIQQTYGFK (61 aa). The segment at 62 to 139 is domain II; sequence TFKERLLFTD…KIIQNKEVKK (78 aa). Positions 140–144 are flexible linker; that stretch reads FDDIT. A domain III region spans residues 144-198; the sequence is TNIKELKQTLNKLGFKASDIDYAVNNISSTKELDLMVEESINLITTQMHANNQTT.

The protein belongs to the RuvA family. In terms of assembly, homotetramer. Forms an RuvA(8)-RuvB(12)-Holliday junction (HJ) complex. HJ DNA is sandwiched between 2 RuvA tetramers; dsDNA enters through RuvA and exits via RuvB. An RuvB hexamer assembles on each DNA strand where it exits the tetramer. Each RuvB hexamer is contacted by two RuvA subunits (via domain III) on 2 adjacent RuvB subunits; this complex drives branch migration. In the full resolvosome a probable DNA-RuvA(4)-RuvB(12)-RuvC(2) complex forms which resolves the HJ.

It is found in the cytoplasm. In terms of biological role, the RuvA-RuvB-RuvC complex processes Holliday junction (HJ) DNA during genetic recombination and DNA repair, while the RuvA-RuvB complex plays an important role in the rescue of blocked DNA replication forks via replication fork reversal (RFR). RuvA specifically binds to HJ cruciform DNA, conferring on it an open structure. The RuvB hexamer acts as an ATP-dependent pump, pulling dsDNA into and through the RuvAB complex. HJ branch migration allows RuvC to scan DNA until it finds its consensus sequence, where it cleaves and resolves the cruciform DNA. This chain is Holliday junction branch migration complex subunit RuvA, found in Mycoplasmopsis synoviae (strain 53) (Mycoplasma synoviae).